An 808-amino-acid chain; its full sequence is Phospholipase D alpha 1 (808 aa).

The C2 domain maps to Met1–Ile125. Asp186 contacts Ca(2+). Residues Thr326 to Arg364 enclose the PLD phosphodiesterase 1 domain. Residues His331, Lys333, and Asp338 contribute to the active site. His331 provides a ligand contact to a 1,2-diacyl-sn-glycero-3-phosphate. His370 and His404 together coordinate Ca(2+). Residues Gln520 and His659 each contribute to the a 1,2-diacyl-sn-glycero-3-phosphate site. The PLD phosphodiesterase 2 domain maps to Phe654 to Ser681. Active-site residues include His659, Lys661, and Asp666. Residue Glu720 participates in Ca(2+) binding.

This sequence belongs to the phospholipase D family. C2-PLD subfamily. As to quaternary structure, interacts (via C2 domain) with CARDA (via RGD or KGE motifs). Ca(2+) serves as cofactor.

It catalyses the reaction a 1,2-diacyl-sn-glycero-3-phosphocholine + H2O = a 1,2-diacyl-sn-glycero-3-phosphate + choline + H(+). Functionally, hydrolyzes glycerol-phospholipids at the terminal phosphodiesteric bond. Plays an important role in various cellular processes. This Cynara cardunculus (Cardoon) protein is Phospholipase D alpha 1.